A 348-amino-acid chain; its full sequence is Protein RecA (348 aa).

Gly64–Thr71 serves as a coordination point for ATP. Residues Glu324–Leu335 show a composition bias toward basic and acidic residues. The interval Glu324–Glu348 is disordered. The span at Ala336–Glu348 shows a compositional bias: acidic residues.

The protein belongs to the RecA family.

The protein resides in the cytoplasm. Can catalyze the hydrolysis of ATP in the presence of single-stranded DNA, the ATP-dependent uptake of single-stranded DNA by duplex DNA, and the ATP-dependent hybridization of homologous single-stranded DNAs. It interacts with LexA causing its activation and leading to its autocatalytic cleavage. This is Protein RecA from Listeria ivanovii.